Here is a 213-residue protein sequence, read N- to C-terminus: Ferric nitrobindin-like protein (213 aa).

The tract at residues 17–42 (VNLAAEQSKSTSDKNLPEFGDMPIPD) is disordered. The GXWXGXG motif lies at 65–71 (GVWRGQG).

This sequence belongs to the nitrobindin family.

The sequence is that of Ferric nitrobindin-like protein from Corynebacterium jeikeium (strain K411).